Reading from the N-terminus, the 370-residue chain is tRNA N6-adenosine threonylcarbamoyltransferase (370 aa).

Positions 122 and 126 each coordinate Fe cation. Substrate-binding positions include 153-157 (LLSGG), Asp186, Gly199, and Asn298. Position 326 (Asp326) interacts with Fe cation.

The protein belongs to the KAE1 / TsaD family. Fe(2+) serves as cofactor.

The protein resides in the cytoplasm. It catalyses the reaction L-threonylcarbamoyladenylate + adenosine(37) in tRNA = N(6)-L-threonylcarbamoyladenosine(37) in tRNA + AMP + H(+). Its function is as follows. Required for the formation of a threonylcarbamoyl group on adenosine at position 37 (t(6)A37) in tRNAs that read codons beginning with adenine. Is involved in the transfer of the threonylcarbamoyl moiety of threonylcarbamoyl-AMP (TC-AMP) to the N6 group of A37, together with TsaE and TsaB. TsaD likely plays a direct catalytic role in this reaction. The polypeptide is tRNA N6-adenosine threonylcarbamoyltransferase (Granulibacter bethesdensis (strain ATCC BAA-1260 / CGDNIH1)).